Reading from the N-terminus, the 892-residue chain is Alanine--tRNA ligase (892 aa).

Zn(2+)-binding residues include histidine 596, histidine 600, cysteine 700, and histidine 704.

The protein belongs to the class-II aminoacyl-tRNA synthetase family. Requires Zn(2+) as cofactor.

Its subcellular location is the cytoplasm. The enzyme catalyses tRNA(Ala) + L-alanine + ATP = L-alanyl-tRNA(Ala) + AMP + diphosphate. Functionally, catalyzes the attachment of alanine to tRNA(Ala) in a two-step reaction: alanine is first activated by ATP to form Ala-AMP and then transferred to the acceptor end of tRNA(Ala). Also edits incorrectly charged Ser-tRNA(Ala) and Gly-tRNA(Ala) via its editing domain. This chain is Alanine--tRNA ligase, found in Methanococcus maripaludis (strain C7 / ATCC BAA-1331).